Here is a 299-residue protein sequence, read N- to C-terminus: 4-hydroxy-tetrahydrodipicolinate synthase (299 aa).

Threonine 45 is a binding site for pyruvate. Residue tyrosine 133 is the Proton donor/acceptor of the active site. The active-site Schiff-base intermediate with substrate is the lysine 161. A pyruvate-binding site is contributed by isoleucine 203.

Belongs to the DapA family. In terms of assembly, homotetramer; dimer of dimers.

It localises to the cytoplasm. It carries out the reaction L-aspartate 4-semialdehyde + pyruvate = (2S,4S)-4-hydroxy-2,3,4,5-tetrahydrodipicolinate + H2O + H(+). It functions in the pathway amino-acid biosynthesis; L-lysine biosynthesis via DAP pathway; (S)-tetrahydrodipicolinate from L-aspartate: step 3/4. Its function is as follows. Catalyzes the condensation of (S)-aspartate-beta-semialdehyde [(S)-ASA] and pyruvate to 4-hydroxy-tetrahydrodipicolinate (HTPA). This chain is 4-hydroxy-tetrahydrodipicolinate synthase, found in Blochmanniella pennsylvanica (strain BPEN).